Reading from the N-terminus, the 258-residue chain is Imidazole glycerol phosphate synthase subunit HisF (258 aa).

Residues D11 and D130 contribute to the active site.

Belongs to the HisA/HisF family. Heterodimer of HisH and HisF.

The protein localises to the cytoplasm. It carries out the reaction 5-[(5-phospho-1-deoxy-D-ribulos-1-ylimino)methylamino]-1-(5-phospho-beta-D-ribosyl)imidazole-4-carboxamide + L-glutamine = D-erythro-1-(imidazol-4-yl)glycerol 3-phosphate + 5-amino-1-(5-phospho-beta-D-ribosyl)imidazole-4-carboxamide + L-glutamate + H(+). Its pathway is amino-acid biosynthesis; L-histidine biosynthesis; L-histidine from 5-phospho-alpha-D-ribose 1-diphosphate: step 5/9. IGPS catalyzes the conversion of PRFAR and glutamine to IGP, AICAR and glutamate. The HisF subunit catalyzes the cyclization activity that produces IGP and AICAR from PRFAR using the ammonia provided by the HisH subunit. The protein is Imidazole glycerol phosphate synthase subunit HisF of Stenotrophomonas maltophilia (strain K279a).